We begin with the raw amino-acid sequence, 428 residues long: D-amino acid dehydrogenase (428 aa).

Position 3–17 (3–17) interacts with FAD; the sequence is VVVLGSGVVGVTSAY.

The protein belongs to the DadA oxidoreductase family. It depends on FAD as a cofactor.

It catalyses the reaction a D-alpha-amino acid + A + H2O = a 2-oxocarboxylate + AH2 + NH4(+). It participates in amino-acid degradation; D-alanine degradation; NH(3) and pyruvate from D-alanine: step 1/1. In terms of biological role, oxidative deamination of D-amino acids. This chain is D-amino acid dehydrogenase, found in Paraburkholderia phytofirmans (strain DSM 17436 / LMG 22146 / PsJN) (Burkholderia phytofirmans).